The sequence spans 942 residues: Apolipoprotein B receptor (942 aa).

Disordered stretches follow at residues 66–212, 240–269, 283–487, 501–607, and 671–942; these read GLRS…VTED, ERMVPMRDGERARAQGTQCPGAESEDQAML, DSLG…SPER, AGPE…VPWE, and EGRG…PKPQ. 5 stretches are compositionally biased toward basic and acidic residues: residues 106 to 123, 132 to 143, 240 to 252, 312 to 330, and 338 to 352; these read QAERQDTGSWKAAEDARG, PEAEPGTHRDRS, ERMVPMRDGERAR, EADKGDQQDEVDEKREAEV, and EAERTGEMTEGHIAE. The segment covering 353-370 has biased composition (acidic residues); the sequence is EEAMGEQETEGSFEDEER. S364 carries the phosphoserine modification. Over residues 384 to 397 the composition is skewed to basic and acidic residues; the sequence is EEVRAEESSREKRN. The segment covering 415–425 has biased composition (acidic residues); sequence PDWEDSPEVST. Basic and acidic residues-rich tracts occupy residues 444-458 and 466-475; these read LRVKVTEGQDPELVR and QLEEGQKGQE. A phosphoserine mark is found at S484 and S520. Composition is skewed to basic and acidic residues over residues 514–531 and 672–687; these read GVDRRNSQEVKADAEAGK and GRGEAGRGTELEETTE. Over residues 709–721 the composition is skewed to acidic residues; that stretch reads QEIDGTEEGEQAE. Over residues 837 to 853 the composition is skewed to low complexity; the sequence is SRLDVSVPRSRVLLSRS. Residues 854–863 are compositionally biased toward basic residues; that stretch reads SSRRRSRPSF.

In terms of assembly, homodimer. Post-translationally, there are 2 forms in macrophages, the membrane-binding proteins 200 kDa (MBP 200) and 235 kDa (MBP 235), that can be reduced into a single active ligand-binding species with intermediate mobility (MBP 200R). In terms of tissue distribution, highly expressed in spleen, lung and skeletal muscle, and weakly in brain, heart, kidney, and testis.

The protein localises to the cell membrane. Macrophage receptor that binds to the apolipoprotein B48 (APOB) of dietary triglyceride (TG)-rich lipoproteins (TRL) or to a like domain of APOB in hypertriglyceridemic very low density lipoprotein (HTG-VLDL). Binds and internalizes TRL when out of the context of the macrophage. May provide essential lipids to reticuloendothelial cells. Could also be involved in foam cell formation with elevated TRL and remnant lipoprotein (RLP). Mediates the rapid high-affinity uptake of chylomicrons (CM), HTG-VLDL, and trypsinized (tryp) VLDL devoid of APOE in vitro in macrophages. This chain is Apolipoprotein B receptor, found in Mus musculus (Mouse).